The following is a 373-amino-acid chain: Anhydro-N-acetylmuramic acid kinase (373 aa).

12 to 19 lines the ATP pocket; the sequence is GTSLDGVD.

It belongs to the anhydro-N-acetylmuramic acid kinase family.

It catalyses the reaction 1,6-anhydro-N-acetyl-beta-muramate + ATP + H2O = N-acetyl-D-muramate 6-phosphate + ADP + H(+). It participates in amino-sugar metabolism; 1,6-anhydro-N-acetylmuramate degradation. Its pathway is cell wall biogenesis; peptidoglycan recycling. Its function is as follows. Catalyzes the specific phosphorylation of 1,6-anhydro-N-acetylmuramic acid (anhMurNAc) with the simultaneous cleavage of the 1,6-anhydro ring, generating MurNAc-6-P. Is required for the utilization of anhMurNAc either imported from the medium or derived from its own cell wall murein, and thus plays a role in cell wall recycling. The protein is Anhydro-N-acetylmuramic acid kinase of Salmonella agona (strain SL483).